The chain runs to 1423 residues: Fructan beta-fructosidase (1423 aa).

An N-terminal signal peptide occupies residues 1 to 39 (MEEETVCKNWFMRKSGKSWIFGCAVFFVLGLATALPVAA). Residues 44–161 (QTTAADTAVT…TNLEDMSHDT (118 aa)) are disordered. Residues 69–126 (AVTETTQSEGTASKQLTTPAVADQTTEPTDNEPISSSDGASSPYQVTDTTEPQQTLTP) show a composition bias toward polar residues. Substrate contacts are provided by residues 455–458 (WAND), Gln474, 513–514 (FS), 581–582 (RD), and Asp783. Asp458 is a catalytic residue. The involved in binding of sugars with beta-(2,6) linkages or binding of molecular weight fructans stretch occupies residues 867–871 (ASVEV). The 79-residue stretch at 924 to 1002 (PVAMNTTTAK…SKENPSLSKT (79 aa)) folds into the BIG2 domain. The segment covering 1368–1385 (DVNSVQQTEPSVMSSSPK) has biased composition (polar residues). The interval 1368–1394 (DVNSVQQTEPSVMSSSPKATLPDTGDH) is disordered. The LPXTG sorting signal motif lies at 1388 to 1392 (LPDTG). Thr1391 carries the post-translational modification Pentaglycyl murein peptidoglycan amidated threonine. Residues 1392 to 1423 (GDHKTDLSQLGVLAMIGSFLVEIAGYFKKRKD) constitute a propeptide, removed by sortase.

Belongs to the glycosyl hydrolase 32 family.

Its subcellular location is the secreted. It localises to the cell wall. The enzyme catalyses Hydrolysis of terminal, non-reducing (2-&gt;1)- and (2-&gt;6)-linked beta-D-fructofuranose residues in fructans.. This protein is a fructanase enzyme which degrades levans and inulins to fructose and also cleaves sucrose into glucose and fructose and can therefore function as an extracellular invertase. This chain is Fructan beta-fructosidase (fruA), found in Streptococcus mutans serotype c (strain ATCC 700610 / UA159).